Reading from the N-terminus, the 216-residue chain is Phosphatidylserine decarboxylase proenzyme (216 aa).

Catalysis depends on S185, which acts as the Schiff-base intermediate with substrate; via pyruvic acid. Position 185 is a pyruvic acid (Ser); by autocatalysis (S185).

The protein belongs to the phosphatidylserine decarboxylase family. PSD-A subfamily. Heterodimer of a large membrane-associated beta subunit and a small pyruvoyl-containing alpha subunit. It depends on pyruvate as a cofactor. Is synthesized initially as an inactive proenzyme. Formation of the active enzyme involves a self-maturation process in which the active site pyruvoyl group is generated from an internal serine residue via an autocatalytic post-translational modification. Two non-identical subunits are generated from the proenzyme in this reaction, and the pyruvate is formed at the N-terminus of the alpha chain, which is derived from the carboxyl end of the proenzyme. The post-translation cleavage follows an unusual pathway, termed non-hydrolytic serinolysis, in which the side chain hydroxyl group of the serine supplies its oxygen atom to form the C-terminus of the beta chain, while the remainder of the serine residue undergoes an oxidative deamination to produce ammonia and the pyruvoyl prosthetic group on the alpha chain.

The protein resides in the cell membrane. It carries out the reaction a 1,2-diacyl-sn-glycero-3-phospho-L-serine + H(+) = a 1,2-diacyl-sn-glycero-3-phosphoethanolamine + CO2. The protein operates within phospholipid metabolism; phosphatidylethanolamine biosynthesis; phosphatidylethanolamine from CDP-diacylglycerol: step 2/2. Catalyzes the formation of phosphatidylethanolamine (PtdEtn) from phosphatidylserine (PtdSer). This is Phosphatidylserine decarboxylase proenzyme from Nitrosomonas europaea (strain ATCC 19718 / CIP 103999 / KCTC 2705 / NBRC 14298).